The following is a 191-amino-acid chain: Adenylate kinase (191 aa).

12–17 (GSGKTT) is a binding site for ATP. Residues 34 to 63 (STGDLLRAESAKKTERGLLIEKFTSQGELV) form an NMP region. AMP-binding positions include T35, R40, 61 to 63 (ELV), 88 to 91 (GYPR), and Q95. Residues 130–136 (GRSRGAD) form an LID region. R131 provides a ligand contact to ATP. Residues R133 and R145 each coordinate AMP. ATP is bound at residue R173.

This sequence belongs to the adenylate kinase family. As to quaternary structure, monomer.

Its subcellular location is the cytoplasm. It catalyses the reaction AMP + ATP = 2 ADP. It functions in the pathway purine metabolism; AMP biosynthesis via salvage pathway; AMP from ADP: step 1/1. Catalyzes the reversible transfer of the terminal phosphate group between ATP and AMP. Plays an important role in cellular energy homeostasis and in adenine nucleotide metabolism. This is Adenylate kinase from Helicobacter pylori (strain HPAG1).